The sequence spans 375 residues: Queuine tRNA-ribosyltransferase (375 aa).

Catalysis depends on D90, which acts as the Proton acceptor. Substrate-binding positions include 90–94, D144, Q193, and G220; that span reads DSGGF. Residues 251-257 form an RNA binding region; the sequence is GVGTPED. The active-site Nucleophile is the D270. Positions 275–279 are RNA binding; important for wobble base 34 recognition; that stretch reads TRNAR. Residues C308, C310, C313, and H339 each coordinate Zn(2+).

Belongs to the queuine tRNA-ribosyltransferase family. Homodimer. Within each dimer, one monomer is responsible for RNA recognition and catalysis, while the other monomer binds to the replacement base PreQ1. Zn(2+) serves as cofactor.

The catalysed reaction is 7-aminomethyl-7-carbaguanine + guanosine(34) in tRNA = 7-aminomethyl-7-carbaguanosine(34) in tRNA + guanine. It participates in tRNA modification; tRNA-queuosine biosynthesis. Catalyzes the base-exchange of a guanine (G) residue with the queuine precursor 7-aminomethyl-7-deazaguanine (PreQ1) at position 34 (anticodon wobble position) in tRNAs with GU(N) anticodons (tRNA-Asp, -Asn, -His and -Tyr). Catalysis occurs through a double-displacement mechanism. The nucleophile active site attacks the C1' of nucleotide 34 to detach the guanine base from the RNA, forming a covalent enzyme-RNA intermediate. The proton acceptor active site deprotonates the incoming PreQ1, allowing a nucleophilic attack on the C1' of the ribose to form the product. After dissociation, two additional enzymatic reactions on the tRNA convert PreQ1 to queuine (Q), resulting in the hypermodified nucleoside queuosine (7-(((4,5-cis-dihydroxy-2-cyclopenten-1-yl)amino)methyl)-7-deazaguanosine). The protein is Queuine tRNA-ribosyltransferase of Janthinobacterium sp. (strain Marseille) (Minibacterium massiliensis).